The primary structure comprises 545 residues: CTP synthase (545 aa).

The amidoligase domain stretch occupies residues 2–266 (TTNYIFVTGG…DDYICKRFSL (265 aa)). Residue serine 14 coordinates CTP. Serine 14 is a binding site for UTP. Residues 15–20 (SLGKGI) and aspartate 72 contribute to the ATP site. Mg(2+) is bound by residues aspartate 72 and glutamate 140. CTP is bound by residues 147–149 (DIE), 187–192 (KTKPTQ), and lysine 223. Residues 187 to 192 (KTKPTQ) and lysine 223 each bind UTP. 239 to 241 (KDV) is an ATP binding site. Positions 291–542 (TIGMVGKYIE…VKAANEHQKR (252 aa)) constitute a Glutamine amidotransferase type-1 domain. An L-glutamine-binding site is contributed by glycine 352. Catalysis depends on cysteine 379, which acts as the Nucleophile; for glutamine hydrolysis. Residues 380 to 383 (LGMQ), glutamate 403, and arginine 470 each bind L-glutamine. Catalysis depends on residues histidine 515 and glutamate 517.

The protein belongs to the CTP synthase family. As to quaternary structure, homotetramer.

It catalyses the reaction UTP + L-glutamine + ATP + H2O = CTP + L-glutamate + ADP + phosphate + 2 H(+). The enzyme catalyses L-glutamine + H2O = L-glutamate + NH4(+). The catalysed reaction is UTP + NH4(+) + ATP = CTP + ADP + phosphate + 2 H(+). It participates in pyrimidine metabolism; CTP biosynthesis via de novo pathway; CTP from UDP: step 2/2. Its activity is regulated as follows. Allosterically activated by GTP, when glutamine is the substrate; GTP has no effect on the reaction when ammonia is the substrate. The allosteric effector GTP functions by stabilizing the protein conformation that binds the tetrahedral intermediate(s) formed during glutamine hydrolysis. Inhibited by the product CTP, via allosteric rather than competitive inhibition. Its function is as follows. Catalyzes the ATP-dependent amination of UTP to CTP with either L-glutamine or ammonia as the source of nitrogen. Regulates intracellular CTP levels through interactions with the four ribonucleotide triphosphates. The polypeptide is CTP synthase (Salmonella typhi).